Here is a 265-residue protein sequence, read N- to C-terminus: Indole-3-glycerol phosphate synthase (265 aa).

This sequence belongs to the TrpC family.

It catalyses the reaction 1-(2-carboxyphenylamino)-1-deoxy-D-ribulose 5-phosphate + H(+) = (1S,2R)-1-C-(indol-3-yl)glycerol 3-phosphate + CO2 + H2O. The protein operates within amino-acid biosynthesis; L-tryptophan biosynthesis; L-tryptophan from chorismate: step 4/5. The polypeptide is Indole-3-glycerol phosphate synthase (Syntrophobacter fumaroxidans (strain DSM 10017 / MPOB)).